We begin with the raw amino-acid sequence, 100 residues long: NADH-quinone oxidoreductase subunit K 2 (100 aa).

Transmembrane regions (helical) follow at residues 4–24 (LWWH…GVLL), 28–48 (ILVV…NFIA), and 60–80 (IFAI…LGIL).

This sequence belongs to the complex I subunit 4L family. In terms of assembly, NDH-1 is composed of 14 different subunits. Subunits NuoA, H, J, K, L, M, N constitute the membrane sector of the complex.

Its subcellular location is the cell inner membrane. The catalysed reaction is a quinone + NADH + 5 H(+)(in) = a quinol + NAD(+) + 4 H(+)(out). Its function is as follows. NDH-1 shuttles electrons from NADH, via FMN and iron-sulfur (Fe-S) centers, to quinones in the respiratory chain. The immediate electron acceptor for the enzyme in this species is believed to be ubiquinone. Couples the redox reaction to proton translocation (for every two electrons transferred, four hydrogen ions are translocated across the cytoplasmic membrane), and thus conserves the redox energy in a proton gradient. The polypeptide is NADH-quinone oxidoreductase subunit K 2 (Sinorhizobium fredii (strain NBRC 101917 / NGR234)).